Reading from the N-terminus, the 172-residue chain is Adrenodoxin-like protein 1, mitochondrial (172 aa).

The 2Fe-2S ferredoxin-type domain maps to 57-159; it reads VNITYVDKDG…GMELELPKAT (103 aa). Residues C94, C100, C103, and C140 each contribute to the [2Fe-2S] cluster site.

The protein belongs to the adrenodoxin/putidaredoxin family. It depends on [2Fe-2S] cluster as a cofactor.

The protein resides in the mitochondrion matrix. Its function is as follows. Required for ecdysteroidogenesis in the prothoracic gland which is necessary for larval to pupal transition. The chain is Adrenodoxin-like protein 1, mitochondrial from Drosophila melanogaster (Fruit fly).